Consider the following 341-residue polypeptide: UDP-3-O-acylglucosamine N-acyltransferase (341 aa).

Residue H239 is the Proton acceptor of the active site.

This sequence belongs to the transferase hexapeptide repeat family. LpxD subfamily. In terms of assembly, homotrimer.

It catalyses the reaction a UDP-3-O-[(3R)-3-hydroxyacyl]-alpha-D-glucosamine + a (3R)-hydroxyacyl-[ACP] = a UDP-2-N,3-O-bis[(3R)-3-hydroxyacyl]-alpha-D-glucosamine + holo-[ACP] + H(+). The protein operates within bacterial outer membrane biogenesis; LPS lipid A biosynthesis. Functionally, catalyzes the N-acylation of UDP-3-O-acylglucosamine using 3-hydroxyacyl-ACP as the acyl donor. Is involved in the biosynthesis of lipid A, a phosphorylated glycolipid that anchors the lipopolysaccharide to the outer membrane of the cell. The polypeptide is UDP-3-O-acylglucosamine N-acyltransferase (Shewanella sp. (strain MR-4)).